A 548-amino-acid polypeptide reads, in one-letter code: Protein swallow (548 aa).

Disordered regions lie at residues 67-109 (AKTC…GRSS), 184-206 (NCQT…SSSF), and 358-428 (FSSV…ELIS). The span at 79 to 91 (QEDEDDYDEDVDG) shows a compositional bias: acidic residues. Positions 189-205 (SNSDSNYNSNSNNSSSS) are enriched in low complexity. 2 positions are modified to phosphoserine: S362 and S368. A compositionally biased stretch (polar residues) spans 388-402 (APNNSETSQPSSNDS). A compositionally biased stretch (basic and acidic residues) spans 406–420 (VEAHEEERPSSRRQW). 6 positions are modified to phosphoserine: S463, S471, S475, S483, S485, and S487.

As to quaternary structure, may be a homo- or heterodimer.

The protein localises to the nucleus. Functionally, has a role in localizing bicoid mRNA at the anterior margin of the oocyte during oogenesis, and a poorly characterized role in nuclear divisions in early embryogenesis. The polypeptide is Protein swallow (swa) (Drosophila melanogaster (Fruit fly)).